Here is a 194-residue protein sequence, read N- to C-terminus: Large ribosomal subunit protein uL22 (194 aa).

This sequence belongs to the universal ribosomal protein uL22 family.

The polypeptide is Large ribosomal subunit protein uL22 (rpl17) (Aspergillus fumigatus (strain ATCC MYA-4609 / CBS 101355 / FGSC A1100 / Af293) (Neosartorya fumigata)).